A 182-amino-acid polypeptide reads, in one-letter code: Thioredoxin F-type, chloroplastic (182 aa).

The segment at 1–22 is disordered; the sequence is MPLSLRLAPSPTALSPTTGGFS. Residues 52 to 177 form the Thioredoxin domain; the sequence is KRGDSSVVRC…LVAAIETARS (126 aa). Residues Cys102 and Cys105 each act as nucleophile in the active site. Cys102 and Cys105 are joined by a disulfide.

The protein belongs to the thioredoxin family. Plant F-type subfamily. Forms a complex with heterodimeric ferredoxin-thioredoxin reductase (FTR) and ferredoxin.

The protein localises to the plastid. The protein resides in the chloroplast. Participates in various redox reactions through the reversible oxidation of the active center dithiol to a disulfide. The F form is known to activate a number of enzymes of the photosynthetic carbon cycle. The chain is Thioredoxin F-type, chloroplastic (TRXF) from Brassica napus (Rape).